Reading from the N-terminus, the 391-residue chain is Dual-specificity RNA methyltransferase RlmN (391 aa).

Residues methionine 1–isoleucine 20 are disordered. A compositionally biased stretch (basic and acidic residues) spans threonine 10–isoleucine 20. Glutamate 120 (proton acceptor) is an active-site residue. The Radical SAM core domain maps to aspartate 126–aspartate 366. Cysteine 133 and cysteine 371 are joined by a disulfide. Residues cysteine 140, cysteine 144, and cysteine 147 each contribute to the [4Fe-4S] cluster site. S-adenosyl-L-methionine-binding positions include glycine 195–glutamate 196, serine 227, serine 249–histidine 251, and asparagine 328. The S-methylcysteine intermediate role is filled by cysteine 371.

The protein belongs to the radical SAM superfamily. RlmN family. [4Fe-4S] cluster is required as a cofactor.

Its subcellular location is the cytoplasm. The enzyme catalyses adenosine(2503) in 23S rRNA + 2 reduced [2Fe-2S]-[ferredoxin] + 2 S-adenosyl-L-methionine = 2-methyladenosine(2503) in 23S rRNA + 5'-deoxyadenosine + L-methionine + 2 oxidized [2Fe-2S]-[ferredoxin] + S-adenosyl-L-homocysteine. It carries out the reaction adenosine(37) in tRNA + 2 reduced [2Fe-2S]-[ferredoxin] + 2 S-adenosyl-L-methionine = 2-methyladenosine(37) in tRNA + 5'-deoxyadenosine + L-methionine + 2 oxidized [2Fe-2S]-[ferredoxin] + S-adenosyl-L-homocysteine. Specifically methylates position 2 of adenine 2503 in 23S rRNA and position 2 of adenine 37 in tRNAs. m2A2503 modification seems to play a crucial role in the proofreading step occurring at the peptidyl transferase center and thus would serve to optimize ribosomal fidelity. The sequence is that of Dual-specificity RNA methyltransferase RlmN from Zymomonas mobilis subsp. mobilis (strain ATCC 31821 / ZM4 / CP4).